A 208-amino-acid polypeptide reads, in one-letter code: Uracil phosphoribosyltransferase (208 aa).

5-phospho-alpha-D-ribose 1-diphosphate contacts are provided by residues Arg-78, Arg-103, and 130-138; that span reads DPMLATGGT. Uracil-binding positions include Ile-193 and 198–200; that span reads GDA. Asp-199 contributes to the 5-phospho-alpha-D-ribose 1-diphosphate binding site.

This sequence belongs to the UPRTase family. The cofactor is Mg(2+).

It carries out the reaction UMP + diphosphate = 5-phospho-alpha-D-ribose 1-diphosphate + uracil. The protein operates within pyrimidine metabolism; UMP biosynthesis via salvage pathway; UMP from uracil: step 1/1. Allosterically activated by GTP. Its function is as follows. Catalyzes the conversion of uracil and 5-phospho-alpha-D-ribose 1-diphosphate (PRPP) to UMP and diphosphate. This chain is Uracil phosphoribosyltransferase, found in Desulfotalea psychrophila (strain LSv54 / DSM 12343).